The chain runs to 403 residues: Phosphoglycerate kinase (403 aa).

Substrate is bound by residues 24-26 (DLN), Arg39, 62-65 (HLGR), Arg121, and Arg161. ATP-binding positions include Lys211, Gly299, Glu330, and 359–362 (GGDS).

It belongs to the phosphoglycerate kinase family. Monomer.

The protein localises to the cytoplasm. It carries out the reaction (2R)-3-phosphoglycerate + ATP = (2R)-3-phospho-glyceroyl phosphate + ADP. It participates in carbohydrate degradation; glycolysis; pyruvate from D-glyceraldehyde 3-phosphate: step 2/5. This chain is Phosphoglycerate kinase, found in Corynebacterium jeikeium (strain K411).